Here is a 491-residue protein sequence, read N- to C-terminus: UDP-N-acetylmuramate--L-alanine ligase (491 aa).

An ATP-binding site is contributed by 126-132 (GTHGKTT).

Belongs to the MurCDEF family.

Its subcellular location is the cytoplasm. It carries out the reaction UDP-N-acetyl-alpha-D-muramate + L-alanine + ATP = UDP-N-acetyl-alpha-D-muramoyl-L-alanine + ADP + phosphate + H(+). It functions in the pathway cell wall biogenesis; peptidoglycan biosynthesis. Functionally, cell wall formation. This Escherichia coli (strain K12 / MC4100 / BW2952) protein is UDP-N-acetylmuramate--L-alanine ligase.